A 616-amino-acid polypeptide reads, in one-letter code: MDEEETAEINAQEQEVAGSAGEAAAGPSGAEVQPNDDSVAVERVIDVFEETAEMEAAMIERFFGPSGEVAEEGTLPVPGPSADGEGSANAGGERPSEEDIVLDDGTESDGSYNRPGSDMSLDSPNSEDDSDVEAMPRWMIPQNRLRFAVDMMVSQARNQDGGIAALLNRDNFLQRVRSMVFSQERRRSRNSDEVSPEAEDDELPEHPPPPPPRPPIDIDMEEGVHFDTNLPAEHSYFGPNLNRVPGVNYQEVGSTHHMLIFLHQYILFPGEVLPFMIDGSLFDDDMSGLDGLIFAVAFPLMKPPEDSKKLYGVTCQIYEKGDNGRHLTFYKSRALQRIVINCSDIKGLPQYIARNPTNKCHSKVKILPEYFLPEPLKCIDMGSMSRFRDIPSMRDKYLRYQISSTPWPVEVCQEYAYEDIVERARKKLEVHKIDTMPKCPIQMSFWLVRNLHLTEKMMSQMFLTDSVNLRLQLIGGILKEETLFYCRYCNSSLAYCSDLFAMSKHGVQTQYCNPGGYIHETNTVYRVISHAIGYSGEPSTRFSWFPGYQWHIILCKFCAQHVGWEFKAVEPNLAPKVFYGLAGSSVRIGKAGDSATVNGNNFVVRNMLRVISEGME.

Disordered stretches follow at residues 1-39, 63-137, and 182-220; these read MDEE…DDSV, FGPS…AMPR, and SQER…DIDM. The segment covering 11–32 has biased composition (low complexity); that stretch reads AQEQEVAGSAGEAAAGPSGAEV. A compositionally biased stretch (acidic residues) spans 96–107; sequence SEEDIVLDDGTE. Residues 183–192 show a composition bias toward basic and acidic residues; the sequence is QERRRSRNSD. The segment covering 194–203 has biased composition (acidic residues); that stretch reads VSPEAEDDEL. Positions 206-215 are enriched in pro residues; it reads HPPPPPPRPP. The Lon N-terminal domain maps to 257–482; that stretch reads HMLIFLHQYI…LIGGILKEET (226 aa). A CULT domain is found at 481 to 590; it reads ETLFYCRYCN…LAGSSVRIGK (110 aa). Residues Cys-486, Cys-489, Cys-555, and Cys-558 each coordinate Zn(2+).

Belongs to the CRBN family. Likely a component of a DCX (DDB1-CUL4-X-box) protein ligase complex. May interact with pic/DDB1. In terms of processing, ubiquitinated.

It localises to the nucleus. It participates in protein modification; protein ubiquitination. Its function is as follows. Substrate recognition component of a DCX (DDB1-CUL4-X-box) E3 protein ligase complex that mediates the ubiquitination and subsequent proteasomal degradation of target proteins. Has an essential role in mediating growth by negatively regulating insulin signaling. It also has a role in maintaining presynaptic function in the neuromuscular junction synapses of third-instar larvae. The chain is Protein cereblon from Drosophila persimilis (Fruit fly).